We begin with the raw amino-acid sequence, 184 residues long: Photosystem I assembly protein Ycf4 (184 aa).

Transmembrane regions (helical) follow at residues 22 to 42 (FCWA…GTSS) and 57 to 77 (ILFF…LFIS).

This sequence belongs to the Ycf4 family.

It localises to the plastid. It is found in the chloroplast thylakoid membrane. In terms of biological role, seems to be required for the assembly of the photosystem I complex. The polypeptide is Photosystem I assembly protein Ycf4 (Phalaenopsis aphrodite subsp. formosana (Moth orchid)).